The following is a 101-amino-acid chain: Small ribosomal subunit protein uS14A (101 aa).

A disordered region spans residues 31-74; it reads IRKPSTPEADRAAAQAALQRLPRDASPVRLRNRDAADGRPRGHL. Basic and acidic residues predominate over residues 61–70; sequence RNRDAADGRP.

It belongs to the universal ribosomal protein uS14 family. As to quaternary structure, part of the 30S ribosomal subunit. Contacts proteins S3 and S10.

Binds 16S rRNA, required for the assembly of 30S particles and may also be responsible for determining the conformation of the 16S rRNA at the A site. This is Small ribosomal subunit protein uS14A from Nocardia farcinica (strain IFM 10152).